The primary structure comprises 55 residues: Hydrophobic protein LTI6B (55 aa).

A run of 2 helical transmembrane segments spans residues 8-28 and 31-51; these read IDIL…FGCG and FWIC…YAIY.

This sequence belongs to the UPF0057 (PMP3) family.

It localises to the membrane. Functionally, plays a role in the regulation of membrane potential. Could mediate a proton leak. This chain is Hydrophobic protein LTI6B (LTI6B), found in Oryza sativa subsp. indica (Rice).